A 254-amino-acid polypeptide reads, in one-letter code: Glucosamine-6-phosphate deaminase (254 aa).

Residue aspartate 67 is the Proton acceptor; for enolization step of the active site. Asparagine 136 serves as the catalytic For ring-opening step. The Proton acceptor; for ring-opening step role is filled by histidine 138. The active-site For ring-opening step is the glutamate 143.

This sequence belongs to the glucosamine/galactosamine-6-phosphate isomerase family. NagB subfamily.

It catalyses the reaction alpha-D-glucosamine 6-phosphate + H2O = beta-D-fructose 6-phosphate + NH4(+). Its pathway is amino-sugar metabolism; N-acetylneuraminate degradation; D-fructose 6-phosphate from N-acetylneuraminate: step 5/5. Functionally, catalyzes the reversible isomerization-deamination of glucosamine 6-phosphate (GlcN6P) to form fructose 6-phosphate (Fru6P) and ammonium ion. This chain is Glucosamine-6-phosphate deaminase, found in Brevibacillus brevis (strain 47 / JCM 6285 / NBRC 100599).